Reading from the N-terminus, the 466-residue chain is Histone acetyltransferase type B catalytic subunit DDB_G0275159 (466 aa).

Positions 169 to 366 constitute an N-acetyltransferase domain; that stretch reads AVFRYHEKLQ…FRIAIKKRLY (198 aa). Residues 240–242 and 247–253 contribute to the acetyl-CoA site; these read YLI and QRMGHGK. Glu-279 (proton donor/acceptor) is an active-site residue. The stretch at 372–459 forms a coiled coil; sequence DSEQIEKMKQ…LEENYHKTLS (88 aa).

The protein belongs to the HAT1 family.

It catalyses the reaction L-lysyl-[protein] + acetyl-CoA = N(6)-acetyl-L-lysyl-[protein] + CoA + H(+). The chain is Histone acetyltransferase type B catalytic subunit DDB_G0275159 from Dictyostelium discoideum (Social amoeba).